Consider the following 364-residue polypeptide: Dihydroorotate dehydrogenase (quinone) (364 aa).

FMN is bound by residues alanine 61–lysine 65 and serine 85. Lysine 65 is a substrate binding site. Asparagine 110–phenylalanine 114 provides a ligand contact to substrate. Residues asparagine 139 and asparagine 170 each contribute to the FMN site. Asparagine 170 contributes to the substrate binding site. Residue serine 173 is the Nucleophile of the active site. Residue asparagine 175 coordinates substrate. The FMN site is built by lysine 214 and serine 242. Asparagine 243–threonine 244 is a binding site for substrate. FMN contacts are provided by residues glycine 266, glycine 295, and tyrosine 316–serine 317.

It belongs to the dihydroorotate dehydrogenase family. Type 2 subfamily. As to quaternary structure, monomer. The cofactor is FMN.

Its subcellular location is the cell membrane. The enzyme catalyses (S)-dihydroorotate + a quinone = orotate + a quinol. Its pathway is pyrimidine metabolism; UMP biosynthesis via de novo pathway; orotate from (S)-dihydroorotate (quinone route): step 1/1. Its function is as follows. Catalyzes the conversion of dihydroorotate to orotate with quinone as electron acceptor. This is Dihydroorotate dehydrogenase (quinone) from Bradyrhizobium sp. (strain BTAi1 / ATCC BAA-1182).